A 991-amino-acid chain; its full sequence is KAT8 regulatory NSL complex subunit 1-like protein (991 aa).

Lysine 136 is covalently cross-linked (Glycyl lysine isopeptide (Lys-Gly) (interchain with G-Cter in SUMO2)). Positions 443 to 462 are disordered; that stretch reads VNSQVPQRSEEPLPEHDFEM. Basic and acidic residues predominate over residues 450 to 461; that stretch reads RSEEPLPEHDFE. Phosphoserine is present on serine 463. The span at 749–763 shows a compositional bias: polar residues; the sequence is ANVTSRTQNPSSQNT. The tract at residues 749–770 is disordered; sequence ANVTSRTQNPSSQNTSRRRLRS. Residues 798–919 form the PEHE domain; the sequence is EILTPRWRKV…DGQEDKSLRW (122 aa). Position 863 is an N6-acetyllysine (lysine 863).

In terms of processing, acetylated on lysine residues by KAT8 upon ionizing radiation-induced DNA damage; deacetylated by HDAC3.

The protein is KAT8 regulatory NSL complex subunit 1-like protein (Kansl1l) of Mus musculus (Mouse).